An 835-amino-acid chain; its full sequence is Neuroligin-2 (835 aa).

A signal peptide spans 1–14 (MWLLALCLVGLAGA). The Extracellular segment spans residues 15–677 (QRGGGGPGGG…DSRDYSTELS (663 aa)). Asn-98 and Asn-136 each carry an N-linked (GlcNAc...) asparagine glycan. Cystine bridges form between Cys-106–Cys-141, Cys-317–Cys-328, and Cys-487–Cys-521. Asn-522 carries N-linked (GlcNAc...) asparagine glycosylation. The segment at 623-668 (PPYATRWPPRPPAGAPGTRRPPPPATLPPEPEPEPGPRAYDRFPGD) is disordered. Pro residues predominate over residues 630 to 658 (PPRPPAGAPGTRRPPPPATLPPEPEPEPG). A helical transmembrane segment spans residues 678–698 (VTVAVGASLLFLNILAFAALY). Residues 678–698 (VTVAVGASLLFLNILAFAALY) form a required for interaction with LHFPL4 region. Topologically, residues 699–835 (YKRDRRQELR…LPHPHSTTRV (137 aa)) are cytoplasmic. Phosphoserine occurs at positions 713 and 718. Residues 790-835 (LLPSGLGPPPPPPPPSLHPFGPFPPPPPTATSHNNTLPHPHSTTRV) are disordered. Residues 795–818 (LGPPPPPPPPSLHPFGPFPPPPPT) are compositionally biased toward pro residues. A compositionally biased stretch (polar residues) spans 823-835 (NNTLPHPHSTTRV).

It belongs to the type-B carboxylesterase/lipase family. As to quaternary structure, interacts with neurexins NRXN1, NRXN2 and NRXN3. Interaction with neurexins is mediated by heparan sulfate glycan modification on neurexin. Interacts (via its C-terminus) with DLG4/PSD-95 (via PDZ domain 3). Interacts with PATJ. Interacts with GPHN. Interacts with MDGA1 and MDGA2. Found in a complex with MAGI2 and IGSF9B, where it interacts with MAGI2 (via WW 1, WW 2 and PDZ 2 domains). Identified in a complex of 720 kDa composed of LHFPL4, NLGN2, GABRA1, GABRB2, GABRG2 and GABRB3. Interacts with LHFPL4; leading to mutual regulation of the protein level and synaptic clustering. Interacts with NLGN2. Expressed in the blood vessel walls. Detected in colon, brain and pancreas islets of Langerhans (at protein level). Detected in brain, and at lower levels in pancreas islet beta cells.

It is found in the cell membrane. The protein localises to the postsynaptic cell membrane. The protein resides in the presynaptic cell membrane. In terms of biological role, transmembrane scaffolding protein involved in cell-cell interactions via its interactions with neurexin family members. Mediates cell-cell interactions both in neurons and in other types of cells, such as Langerhans beta cells. Plays a role in synapse function and synaptic signal transmission, especially via gamma-aminobutyric acid receptors (GABA(A) receptors). Functions by recruiting and clustering synaptic proteins. Promotes clustering of postsynaptic GABRG2 and GPHN. Promotes clustering of postsynaptic LHFPL4. Modulates signaling by inhibitory synapses, and thereby plays a role in controlling the ratio of signaling by excitatory and inhibitory synapses and information processing. Required for normal signal amplitude from inhibitory synapses, but is not essential for normal signal frequency. May promote the initial formation of synapses, but is not essential for this. In vitro, triggers the de novo formation of presynaptic structures. Mediates cell-cell interactions between Langerhans beta cells and modulates insulin secretion. The protein is Neuroligin-2 (NLGN2) of Homo sapiens (Human).